The primary structure comprises 273 residues: Dermonecrotic toxin LhSicTox-alphaIA1ii (273 aa).

His5 is a catalytic residue. Positions 25 and 27 each coordinate Mg(2+). The active-site Nucleophile is His41. Intrachain disulfides connect Cys45-Cys51 and Cys47-Cys190. Position 85 (Asp85) interacts with Mg(2+).

The protein belongs to the arthropod phospholipase D family. Class II subfamily. It depends on Mg(2+) as a cofactor. As to expression, expressed by the venom gland.

It localises to the secreted. The catalysed reaction is an N-(acyl)-sphingosylphosphocholine = an N-(acyl)-sphingosyl-1,3-cyclic phosphate + choline. It carries out the reaction an N-(acyl)-sphingosylphosphoethanolamine = an N-(acyl)-sphingosyl-1,3-cyclic phosphate + ethanolamine. The enzyme catalyses a 1-acyl-sn-glycero-3-phosphocholine = a 1-acyl-sn-glycero-2,3-cyclic phosphate + choline. It catalyses the reaction a 1-acyl-sn-glycero-3-phosphoethanolamine = a 1-acyl-sn-glycero-2,3-cyclic phosphate + ethanolamine. Dermonecrotic toxins cleave the phosphodiester linkage between the phosphate and headgroup of certain phospholipids (sphingolipid and lysolipid substrates), forming an alcohol (often choline) and a cyclic phosphate. This toxin acts on sphingomyelin (SM). It may also act on ceramide phosphoethanolamine (CPE), lysophosphatidylcholine (LPC) and lysophosphatidylethanolamine (LPE), but not on lysophosphatidylserine (LPS), and lysophosphatidylglycerol (LPG). It acts by transphosphatidylation, releasing exclusively cyclic phosphate products as second products. Induces dermonecrosis, hemolysis, increased vascular permeability, edema, inflammatory response, and platelet aggregation. This chain is Dermonecrotic toxin LhSicTox-alphaIA1ii, found in Loxosceles hirsuta (Recluse spider).